The chain runs to 317 residues: AT-hook motif nuclear-localized protein 22 (317 aa).

Disordered regions lie at residues His22–Asp41 and Leu48–Ile106. Over residues Gln26–Asn35 the composition is skewed to low complexity. Residues Leu48–Ala64 are compositionally biased toward basic and acidic residues. Residues Gly72–Asp84 show a composition bias toward gly residues. Positions Arg89–Lys101 form a DNA-binding region, a.T hook. One can recognise a PPC domain in the interval Ala113–Gly253. The disordered stretch occupies residues Asn258 to Gln285. Over residues Gln270–Gln282 the composition is skewed to low complexity.

As to quaternary structure, homodimer. Interacts with HDA1/HDA19, HDA6 and HDA9. As to expression, expressed at the hypocotyl-root transition zone and the root hair zone. Also detected in the inflorescence.

It is found in the nucleus. Transcription factor that specifically binds AT-rich DNA sequences related to the nuclear matrix attachment regions (MARs). Binds an AT-rich DNA sequences in the FLOWERING LOCUS T (FT) promoter. Acts redundantly with AHL18, AHL27 and AHL29 in the regulation of flowering and regulation of the hypocotyl elongation. Plays a role in both photo- and skotomorphogenesis. Acts as a chromatin remodeling factor that modifies the architecture of FLOWERING LOCUS T (FT) chromatin by modulating both H3 acetylation and methylation leading to the regulation of FT expression during flowering induction. The protein is AT-hook motif nuclear-localized protein 22 of Arabidopsis thaliana (Mouse-ear cress).